A 478-amino-acid polypeptide reads, in one-letter code: Pyrrolysine--tRNA ligase (478 aa).

Residues Val-106–Ala-188 are disordered. Positions Ala-122–Gln-132 are enriched in polar residues. Residues Pro-133–Ala-188 show a composition bias toward low complexity.

Belongs to the class-II aminoacyl-tRNA synthetase family.

Its subcellular location is the cytoplasm. The catalysed reaction is tRNA(Pyl) + L-pyrrolysine + ATP = L-pyrrolysyl-tRNA(Pyl) + AMP + diphosphate. Its function is as follows. Catalyzes the attachment of pyrrolysine to tRNA(Pyl). Pyrrolysine is a lysine derivative encoded by the termination codon UAG. The polypeptide is Pyrrolysine--tRNA ligase (Methanosarcina thermophila).